The sequence spans 252 residues: Sororin (252 aa).

Disordered stretches follow at residues 1–48 and 72–142; these read MSGR…WPKT and AVQS…SKKV. Phosphoserine occurs at positions 21, 33, 35, 75, 79, and 83. The span at 86–104 shows a compositional bias: basic and acidic residues; it reads LEKENEPPGRELTKEDLFK. Residues 88–90 carry the KEN box motif; it reads KEN. Phosphothreonine is present on threonine 98. The span at 105–116 shows a compositional bias: low complexity; sequence THSVPATPTSTP. Phosphoserine is present on serine 107. A phosphothreonine mark is found at threonine 111 and threonine 115. Residues 124–140 are compositionally biased toward basic and acidic residues; that stretch reads SSSKEGELDARDLEMSK. Serine 154 bears the Phosphoserine mark. Threonine 159 bears the Phosphothreonine mark. The FGF motif motif lies at 166 to 168; sequence FGF. Positions 199–222 are disordered; that stretch reads WAPDMTLPGISPPPEKQKRKKKKM. At serine 209 the chain carries Phosphoserine. The C-terminal Sororin domain stretch occupies residues 230-252; that stretch reads LDEWAAAMNAEFEAAEQFDLLVE.

Belongs to the sororin family. In terms of assembly, interacts with the APC/C complex. Interacts with the chromatin-bound cohesin complex; the interaction is indirect, occurs after DNA replication and requires acetylation of the cohesin component SMC3. Interacts (via the FGF motif) with PDS5A and PDS5B; the interaction is direct and prevents the interaction of PDS5A with WAPL. Post-translationally, phosphorylated. Phosphorylation, as cells enter mitosis, disrupts the interaction with PDS5A and relieves the inhibition of WAPL by CDCA5. In terms of processing, ubiquitinated by the APC/C complex in G1, leading to its degradation.

It is found in the nucleus. Its subcellular location is the chromosome. The protein localises to the cytoplasm. Regulator of sister chromatid cohesion in mitosis stabilizing cohesin complex association with chromatin. May antagonize the action of WAPL which stimulates cohesin dissociation from chromatin. Cohesion ensures that chromosome partitioning is accurate in both meiotic and mitotic cells and plays an important role in DNA repair. Required for efficient DNA double-stranded break repair. In Homo sapiens (Human), this protein is Sororin (CDCA5).